The chain runs to 341 residues: Phosphate acyltransferase (341 aa).

This sequence belongs to the PlsX family. In terms of assembly, homodimer. Probably interacts with PlsY.

The protein resides in the cytoplasm. It carries out the reaction a fatty acyl-[ACP] + phosphate = an acyl phosphate + holo-[ACP]. It participates in lipid metabolism; phospholipid metabolism. Catalyzes the reversible formation of acyl-phosphate (acyl-PO(4)) from acyl-[acyl-carrier-protein] (acyl-ACP). This enzyme utilizes acyl-ACP as fatty acyl donor, but not acyl-CoA. This Idiomarina loihiensis (strain ATCC BAA-735 / DSM 15497 / L2-TR) protein is Phosphate acyltransferase.